The chain runs to 109 residues: Putative glutaredoxin-C11 (109 aa).

A Glutaredoxin domain is found at 2-108 (AEMVARLASE…PLLKSAGALW (107 aa)). Residues Cys22 and Cys25 are joined by a disulfide bond. Positions 106–109 (ALWL) match the Responsive for interaction with TGA factors motif.

It belongs to the glutaredoxin family. CC-type subfamily.

The protein localises to the cytoplasm. Its subcellular location is the nucleus. In terms of biological role, has a glutathione-disulfide oxidoreductase activity in the presence of NADPH and glutathione reductase. Reduces low molecular weight disulfides and proteins. This chain is Putative glutaredoxin-C11 (GRXC11), found in Oryza sativa subsp. japonica (Rice).